The chain runs to 188 residues: MINAQDIKIGTAIRMDGKLYFCIDFLHVKPGKGNTFMRTKLKDVVNGYVLERRFNIGEKLEDVRVERRPHQYLYMEGADYIFMNQETFDQIPIAHDLINGVDFLLEGMVVDVVSDASTETVLFADVPVKVQMKITYTEPGLKGDTATNTLKPATVESGATVRVPLFINEGETIEIDTRDGSYVGRVKA.

This sequence belongs to the elongation factor P family.

The protein localises to the cytoplasm. It functions in the pathway protein biosynthesis; polypeptide chain elongation. Involved in peptide bond synthesis. Stimulates efficient translation and peptide-bond synthesis on native or reconstituted 70S ribosomes in vitro. Probably functions indirectly by altering the affinity of the ribosome for aminoacyl-tRNA, thus increasing their reactivity as acceptors for peptidyl transferase. The chain is Elongation factor P from Phocaeicola vulgatus (strain ATCC 8482 / DSM 1447 / JCM 5826 / CCUG 4940 / NBRC 14291 / NCTC 11154) (Bacteroides vulgatus).